An 804-amino-acid polypeptide reads, in one-letter code: Exocyst complex component 6 (804 aa).

It belongs to the SEC15 family. The exocyst complex is composed of EXOC1, EXOC2, EXOC3, EXOC4, EXOC5, EXOC6, EXOC7 and EXOC8. Interacts with CNTRL. Interacts with RAB11A in a GTP-dependent manner.

Its subcellular location is the cytoplasm. The protein localises to the perinuclear region. The protein resides in the cell projection. It localises to the growth cone. It is found in the midbody. Its subcellular location is the midbody ring. Functionally, component of the exocyst complex involved in the docking of exocytic vesicles with fusion sites on the plasma membrane. Together with RAB11A, RAB3IP, RAB8A, PARD3, PRKCI, ANXA2, CDC42 and DNMBP promotes transcytosis of PODXL to the apical membrane initiation sites (AMIS), apical surface formation and lumenogenesis. This Homo sapiens (Human) protein is Exocyst complex component 6 (EXOC6).